Reading from the N-terminus, the 451-residue chain is Exodeoxyribonuclease 7 large subunit (451 aa).

Belongs to the XseA family. As to quaternary structure, heterooligomer composed of large and small subunits.

It localises to the cytoplasm. The enzyme catalyses Exonucleolytic cleavage in either 5'- to 3'- or 3'- to 5'-direction to yield nucleoside 5'-phosphates.. In terms of biological role, bidirectionally degrades single-stranded DNA into large acid-insoluble oligonucleotides, which are then degraded further into small acid-soluble oligonucleotides. The sequence is that of Exodeoxyribonuclease 7 large subunit from Bacillus cytotoxicus (strain DSM 22905 / CIP 110041 / 391-98 / NVH 391-98).